The primary structure comprises 185 residues: MDRDEIKSAIEAILFAWSDPLSIKDLSEVLDIGTKEIEGVLAEMINEFNYSKRGIQIIKMNDYYQLSTRPEHYEYLQKLFAPKQNRGITQAALETLAIIAYKQPITKTEIEEIRGVKCDKAISTLLEKELIEEQGRLEKTGRPIIYGTTINFLKVFSISSLDNLPNVSDFNISVDSDILKDIYEK.

This sequence belongs to the ScpB family. As to quaternary structure, homodimer. Homodimerization may be required to stabilize the binding of ScpA to the Smc head domains. Component of a cohesin-like complex composed of ScpA, ScpB and the Smc homodimer, in which ScpA and ScpB bind to the head domain of Smc. The presence of the three proteins is required for the association of the complex with DNA.

It localises to the cytoplasm. Participates in chromosomal partition during cell division. May act via the formation of a condensin-like complex containing Smc and ScpA that pull DNA away from mid-cell into both cell halves. The sequence is that of Segregation and condensation protein B from Alkaliphilus oremlandii (strain OhILAs) (Clostridium oremlandii (strain OhILAs)).